We begin with the raw amino-acid sequence, 260 residues long: Adenosylcobinamide-GDP ribazoletransferase (260 aa).

Helical transmembrane passes span 7 to 27, 45 to 65, 117 to 137, 145 to 165, 187 to 207, and 210 to 230; these read WYFL…TRLP, LMGL…HWLG, AYGV…LASF, WALI…IALY, LLLG…ALAI, and WLIL…GRWF.

It belongs to the CobS family. Requires Mg(2+) as cofactor.

The protein resides in the cell inner membrane. It catalyses the reaction alpha-ribazole + adenosylcob(III)inamide-GDP = adenosylcob(III)alamin + GMP + H(+). The enzyme catalyses alpha-ribazole 5'-phosphate + adenosylcob(III)inamide-GDP = adenosylcob(III)alamin 5'-phosphate + GMP + H(+). It functions in the pathway cofactor biosynthesis; adenosylcobalamin biosynthesis; adenosylcobalamin from cob(II)yrinate a,c-diamide: step 7/7. Joins adenosylcobinamide-GDP and alpha-ribazole to generate adenosylcobalamin (Ado-cobalamin). Also synthesizes adenosylcobalamin 5'-phosphate from adenosylcobinamide-GDP and alpha-ribazole 5'-phosphate. This Synechocystis sp. (strain ATCC 27184 / PCC 6803 / Kazusa) protein is Adenosylcobinamide-GDP ribazoletransferase.